The primary structure comprises 1448 residues: Gag-Pol polyprotein (1448 aa).

The N-myristoyl glycine; by host moiety is linked to residue glycine 2. The short motif at 16–22 (LEKIRLR) is the Nuclear export signal element. Residues 26–32 (KKKYMLK) carry the Nuclear localization signal motif. The segment covering 218 to 227 (HPQQAPQQGQ) has biased composition (low complexity). A disordered region spans residues 218–237 (HPQQAPQQGQLREPSGSDIA). 2 consecutive CCHC-type zinc fingers follow at residues 391 to 408 (IKCW…QCRA) and 412 to 429 (QGCW…KCPN). A disordered region spans residues 440 to 461 (LGKEAPQFPHGSSASGADANCS). The Peptidase A2 domain maps to 517–586 (VEVLLDTGAD…TPINIFGRNL (70 aa)). Catalysis depends on aspartate 522, which acts as the For protease activity; shared with dimeric partner. Residues 640 to 830 (DGQLEEAPPT…PPFQWMGYEL (191 aa)) enclose the Reverse transcriptase domain. Mg(2+) contacts are provided by aspartate 706, aspartate 781, and aspartate 782. The tract at residues 823-831 (FQWMGYELW) is RT 'primer grip'. A Tryptophan repeat motif motif is present at residues 993-1009 (WEQWWTDYWQVTWIPEW). One can recognise an RNase H type-1 domain in the interval 1029–1152 (IEGEETYYVD…IDHLVSQGIR (124 aa)). Positions 1038, 1073, 1093, and 1144 each coordinate Mg(2+). The segment at 1158–1199 (EKIEPAQEEHSKYHSNIKELVFKFGLPRLVAKQIVDTCDKCH) adopts an Integrase-type zinc-finger fold. Residues histidine 1167, histidine 1171, cysteine 1195, and cysteine 1198 each contribute to the Zn(2+) site. The Integrase catalytic domain occupies 1209 to 1359 (VNSDLGTWQM…TPAERLINMI (151 aa)). Aspartate 1219 and aspartate 1271 together coordinate Mg(2+). Positions 1378–1425 (FRVYYREGRDQLWKGPGELLWKGEGAVILKVGTDIKVVPRRKAKIIKD) form a DNA-binding region, integrase-type. A disordered region spans residues 1426 to 1448 (YGGGKEMDSSSHMEDTGEAREVA).

As to quaternary structure, homotrimer. Interacts with gp41 (via C-terminus). In terms of assembly, homodimer. The active site consists of two apposed aspartic acid residues. Heterodimer of p66 RT and p51 RT (RT p66/p51). Heterodimerization of RT is essential for DNA polymerase activity. Despite the sequence identities, p66 RT and p51 RT have distinct folding. As to quaternary structure, homotetramer; may further associate as a homohexadecamer. Requires Mg(2+) as cofactor. Post-translationally, specific enzymatic cleavages by the viral protease yield mature proteins. The protease is released by autocatalytic cleavage. The polyprotein is cleaved during and after budding, this process is termed maturation. Proteolytic cleavage of p66 RT removes the RNase H domain to yield the p51 RT subunit. In terms of processing, capsid protein p24 is phosphorylated.

Its subcellular location is the virion. It localises to the host nucleus. The protein resides in the host cytoplasm. It is found in the host cell membrane. The catalysed reaction is Specific for a P1 residue that is hydrophobic, and P1' variable, but often Pro.. It carries out the reaction Endohydrolysis of RNA in RNA/DNA hybrids. Three different cleavage modes: 1. sequence-specific internal cleavage of RNA. Human immunodeficiency virus type 1 and Moloney murine leukemia virus enzymes prefer to cleave the RNA strand one nucleotide away from the RNA-DNA junction. 2. RNA 5'-end directed cleavage 13-19 nucleotides from the RNA end. 3. DNA 3'-end directed cleavage 15-20 nucleotides away from the primer terminus.. It catalyses the reaction 3'-end directed exonucleolytic cleavage of viral RNA-DNA hybrid.. The enzyme catalyses DNA(n) + a 2'-deoxyribonucleoside 5'-triphosphate = DNA(n+1) + diphosphate. The viral protease is inhibited by many synthetic protease inhibitors (PIs), such as amprenavir, atazanavir, indinavir, loprinavir, nelfinavir, ritonavir and saquinavir. RT can be inhibited either by nucleoside RT inhibitors (NRTIs) or by non nucleoside RT inhibitors (NNRTIs). NRTIs act as chain terminators, whereas NNRTIs inhibit DNA polymerization by binding a small hydrophobic pocket near the RT active site and inducing an allosteric change in this region. Classical NRTIs are abacavir, adefovir (PMEA), didanosine (ddI), lamivudine (3TC), stavudine (d4T), tenofovir (PMPA), zalcitabine (ddC), and zidovudine (AZT). Classical NNRTIs are atevirdine (BHAP U-87201E), delavirdine, efavirenz (DMP-266), emivirine (I-EBU), and nevirapine (BI-RG-587). The tritherapies used as a basic effective treatment of AIDS associate two NRTIs and one NNRTI. Use of protease inhibitors in tritherapy regimens permit more ambitious therapeutic strategies. In terms of biological role, gag-Pol polyprotein and Gag polyprotein may regulate their own translation, by the binding genomic RNA in the 5'-UTR. At low concentration, Gag-Pol and Gag would promote translation, whereas at high concentration, the polyproteins encapsidate genomic RNA and then shut off translation. Functionally, matrix protein p17 has two main functions: in infected cell, it targets Gag and Gag-pol polyproteins to the plasma membrane via a multipartite membrane-binding signal, that includes its myristointegration complex. The myristoylation signal and the NLS exert conflicting influences its subcellular localization. The key regulation of these motifs might be phosphorylation of a portion of MA molecules on the C-terminal tyrosine at the time of virus maturation, by virion-associated cellular tyrosine kinase. Implicated in the release from host cell mediated by Vpu. Its function is as follows. Capsid protein p24 forms the conical core that encapsulates the genomic RNA-nucleocapsid complex in the virion. The core is constituted by capsid protein hexamer subunits. The core is disassembled soon after virion entry. Interaction with host PPIA/CYPA protects the virus from restriction by host TRIM5-alpha and from an unknown antiviral activity in host cells. This capsid restriction by TRIM5 is one of the factors which restricts SIV to the simian species. Nucleocapsid protein p7 encapsulates and protects viral dimeric unspliced (genomic) RNA. Binds these RNAs through its zinc fingers. Facilitates rearangement of nucleic acid secondary structure during retrotranscription of genomic RNA. This capability is referred to as nucleic acid chaperone activity. In terms of biological role, the aspartyl protease mediates proteolytic cleavages of Gag and Gag-Pol polyproteins during or shortly after the release of the virion from the plasma membrane. Cleavages take place as an ordered, step-wise cascade to yield mature proteins. This process is called maturation. Displays maximal activity during the budding process just prior to particle release from the cell. Also cleaves Nef and Vif, probably concomitantly with viral structural proteins on maturation of virus particles. Hydrolyzes host EIF4GI and PABP1 in order to shut off the capped cellular mRNA translation. The resulting inhibition of cellular protein synthesis serves to ensure maximal viral gene expression and to evade host immune response. Functionally, reverse transcriptase/ribonuclease H (RT) is a multifunctional enzyme that converts the viral dimeric RNA genome into dsDNA in the cytoplasm, shortly after virus entry into the cell. This enzyme displays a DNA polymerase activity that can copy either DNA or RNA templates, and a ribonuclease H (RNase H) activity that cleaves the RNA strand of RNA-DNA heteroduplexes in a partially processive 3' to 5' endonucleasic mode. Conversion of viral genomic RNA into dsDNA requires many steps. A tRNA binds to the primer-binding site (PBS) situated at the 5'-end of the viral RNA. RT uses the 3' end of the tRNA primer to perform a short round of RNA-dependent minus-strand DNA synthesis. The reading proceeds through the U5 region and ends after the repeated (R) region which is present at both ends of viral RNA. The portion of the RNA-DNA heteroduplex is digested by the RNase H, resulting in a ssDNA product attached to the tRNA primer. This ssDNA/tRNA hybridizes with the identical R region situated at the 3' end of viral RNA. This template exchange, known as minus-strand DNA strong stop transfer, can be either intra- or intermolecular. RT uses the 3' end of this newly synthesized short ssDNA to perform the RNA-dependent minus-strand DNA synthesis of the whole template. RNase H digests the RNA template except for two polypurine tracts (PPTs) situated at the 5'-end and near the center of the genome. It is not clear if both polymerase and RNase H activities are simultaneous. RNase H can probably proceed both in a polymerase-dependent (RNA cut into small fragments by the same RT performing DNA synthesis) and a polymerase-independent mode (cleavage of remaining RNA fragments by free RTs). Secondly, RT performs DNA-directed plus-strand DNA synthesis using the PPTs that have not been removed by RNase H as primers. PPTs and tRNA primers are then removed by RNase H. The 3' and 5' ssDNA PBS regions hybridize to form a circular dsDNA intermediate. Strand displacement synthesis by RT to the PBS and PPT ends produces a blunt ended, linear dsDNA copy of the viral genome that includes long terminal repeats (LTRs) at both ends. Its function is as follows. Integrase catalyzes viral DNA integration into the host chromosome, by performing a series of DNA cutting and joining reactions. This enzyme activity takes place after virion entry into a cell and reverse transcription of the RNA genome in dsDNA. The first step in the integration process is 3' processing. This step requires a complex comprising the viral genome, matrix protein, Vpr and integrase. This complex is called the pre-integration complex (PIC). The integrase protein removes 2 nucleotides from each 3' end of the viral DNA, leaving recessed CA OH's at the 3' ends. In the second step, the PIC enters cell nucleus. This process is mediated through integrase and Vpr proteins, and allows the virus to infect a non dividing cell. This ability to enter the nucleus is specific of lentiviruses, other retroviruses cannot and rely on cell division to access cell chromosomes. In the third step, termed strand transfer, the integrase protein joins the previously processed 3' ends to the 5' ends of strands of target cellular DNA at the site of integration. The 5'-ends are produced by integrase-catalyzed staggered cuts, 5 bp apart. A Y-shaped, gapped, recombination intermediate results, with the 5'-ends of the viral DNA strands and the 3' ends of target DNA strands remaining unjoined, flanking a gap of 5 bp. The last step is viral DNA integration into host chromosome. This involves host DNA repair synthesis in which the 5 bp gaps between the unjoined strands are filled in and then ligated. Since this process occurs at both cuts flanking the SIV genome, a 5 bp duplication of host DNA is produced at the ends of SIV integration. Alternatively, Integrase may catalyze the excision of viral DNA just after strand transfer, this is termed disintegration. The polypeptide is Gag-Pol polyprotein (gag-pol) (Cercopithecidae (Old World monkeys)).